The sequence spans 424 residues: UDP-N-acetylglucosamine 1-carboxyvinyltransferase 3 (424 aa).

22-23 serves as a coordination point for phosphoenolpyruvate; the sequence is KN. Residue R94 coordinates UDP-N-acetyl-alpha-D-glucosamine. Catalysis depends on D118, which acts as the Proton donor. Residues 123 to 127, D306, and L328 contribute to the UDP-N-acetyl-alpha-D-glucosamine site; that span reads RPVDQ.

It belongs to the EPSP synthase family. MurA subfamily.

Its subcellular location is the cytoplasm. It catalyses the reaction phosphoenolpyruvate + UDP-N-acetyl-alpha-D-glucosamine = UDP-N-acetyl-3-O-(1-carboxyvinyl)-alpha-D-glucosamine + phosphate. The protein operates within cell wall biogenesis; peptidoglycan biosynthesis. Functionally, cell wall formation. Adds enolpyruvyl to UDP-N-acetylglucosamine. The chain is UDP-N-acetylglucosamine 1-carboxyvinyltransferase 3 from Symbiobacterium thermophilum (strain DSM 24528 / JCM 14929 / IAM 14863 / T).